We begin with the raw amino-acid sequence, 517 residues long: Zinc finger protein 215 (517 aa).

Residues 48-126 (RQKFRHFQYL…EDMVTLIEDV (79 aa)) enclose the SCAN box domain. The 74-residue stretch at 164–237 (VTFKDVVVEF…EKEIPRKTIF (74 aa)) folds into the KRAB domain. 4 consecutive C2H2-type zinc fingers follow at residues 379–401 (YECY…QIIH), 407–429 (YKCS…QKLH), 462–484 (YECV…QMIH), and 490–512 (FKCK…QKLH).

The protein belongs to the krueppel C2H2-type zinc-finger protein family.

It localises to the nucleus. May be involved in transcriptional regulation. The sequence is that of Zinc finger protein 215 (ZNF215) from Pongo abelii (Sumatran orangutan).